Consider the following 231-residue polypeptide: ATP phosphoribosyltransferase (231 aa).

This sequence belongs to the ATP phosphoribosyltransferase family. Short subfamily. Heteromultimer composed of HisG and HisZ subunits.

Its subcellular location is the cytoplasm. It catalyses the reaction 1-(5-phospho-beta-D-ribosyl)-ATP + diphosphate = 5-phospho-alpha-D-ribose 1-diphosphate + ATP. It participates in amino-acid biosynthesis; L-histidine biosynthesis; L-histidine from 5-phospho-alpha-D-ribose 1-diphosphate: step 1/9. Catalyzes the condensation of ATP and 5-phosphoribose 1-diphosphate to form N'-(5'-phosphoribosyl)-ATP (PR-ATP). Has a crucial role in the pathway because the rate of histidine biosynthesis seems to be controlled primarily by regulation of HisG enzymatic activity. This Brucella anthropi (strain ATCC 49188 / DSM 6882 / CCUG 24695 / JCM 21032 / LMG 3331 / NBRC 15819 / NCTC 12168 / Alc 37) (Ochrobactrum anthropi) protein is ATP phosphoribosyltransferase.